An 88-amino-acid chain; its full sequence is Large ribosomal subunit protein bL27 (88 aa).

This sequence belongs to the bacterial ribosomal protein bL27 family.

This chain is Large ribosomal subunit protein bL27, found in Mycobacterium leprae (strain TN).